The following is a 164-amino-acid chain: ATP synthase subunit b (164 aa).

Residues 7-25 (SFWLAVSFIIFVYLIYRPA) form a helical membrane-spanning segment.

Belongs to the ATPase B chain family. In terms of assembly, F-type ATPases have 2 components, F(1) - the catalytic core - and F(0) - the membrane proton channel. F(1) has five subunits: alpha(3), beta(3), gamma(1), delta(1), epsilon(1). F(0) has three main subunits: a(1), b(2) and c(10-14). The alpha and beta chains form an alternating ring which encloses part of the gamma chain. F(1) is attached to F(0) by a central stalk formed by the gamma and epsilon chains, while a peripheral stalk is formed by the delta and b chains.

The protein localises to the cell inner membrane. Functionally, f(1)F(0) ATP synthase produces ATP from ADP in the presence of a proton or sodium gradient. F-type ATPases consist of two structural domains, F(1) containing the extramembraneous catalytic core and F(0) containing the membrane proton channel, linked together by a central stalk and a peripheral stalk. During catalysis, ATP synthesis in the catalytic domain of F(1) is coupled via a rotary mechanism of the central stalk subunits to proton translocation. Its function is as follows. Component of the F(0) channel, it forms part of the peripheral stalk, linking F(1) to F(0). This Rickettsia felis (strain ATCC VR-1525 / URRWXCal2) (Rickettsia azadi) protein is ATP synthase subunit b.